A 278-amino-acid chain; its full sequence is Pyrroline-5-carboxylate reductase (278 aa).

This sequence belongs to the pyrroline-5-carboxylate reductase family.

The protein localises to the cytoplasm. It catalyses the reaction L-proline + NADP(+) = (S)-1-pyrroline-5-carboxylate + NADPH + 2 H(+). The catalysed reaction is L-proline + NAD(+) = (S)-1-pyrroline-5-carboxylate + NADH + 2 H(+). It functions in the pathway amino-acid biosynthesis; L-proline biosynthesis; L-proline from L-glutamate 5-semialdehyde: step 1/1. This Actinidia chinensis var. chinensis (Chinese soft-hair kiwi) protein is Pyrroline-5-carboxylate reductase.